Reading from the N-terminus, the 325-residue chain is Protein UL76 (325 aa).

A disordered region spans residues 222 to 286 (ARASAVAGGR…VRGGGAVEPA (65 aa)). The segment covering 247 to 258 (GPGAQTVSASGA) has biased composition (low complexity).

Belongs to the herpesviridae UL24 family.

The protein resides in the virion. It localises to the host cytoplasm. The protein localises to the host nucleus. It is found in the host nucleolus. Its subcellular location is the host Golgi apparatus. In terms of biological role, may participate in nuclear egress of viral particles. Plays a role in the dispersal of several host nucleolar proteins including NCL/nucleolin and NPM1. Since deletion of host NCL/nucleolin negatively impact on nuclear egress, UL76 supposedly acts on this process through its effect on host nucleoli. Induces cell cycle arrest in host cells at the G2/M phase following by apoptosis. The mechanism involves the inhibition of host mitotic complex cyclinB/CDK1. In Human cytomegalovirus (strain Merlin) (HHV-5), this protein is Protein UL76 (UL76).